The following is a 168-amino-acid chain: G/U mismatch-specific DNA glycosylase (168 aa).

This sequence belongs to the uracil-DNA glycosylase (UDG) superfamily. TDG/mug family. In terms of assembly, binds DNA as a monomer.

The protein resides in the cytoplasm. It carries out the reaction Specifically hydrolyzes mismatched double-stranded DNA and polynucleotides, releasing free uracil.. Functionally, excises ethenocytosine and uracil, which can arise by alkylation or deamination of cytosine, respectively, from the corresponding mispairs with guanine in ds-DNA. It is capable of hydrolyzing the carbon-nitrogen bond between the sugar-phosphate backbone of the DNA and the mispaired base. The complementary strand guanine functions in substrate recognition. Required for DNA damage lesion repair in stationary-phase cells. This Escherichia fergusonii (strain ATCC 35469 / DSM 13698 / CCUG 18766 / IAM 14443 / JCM 21226 / LMG 7866 / NBRC 102419 / NCTC 12128 / CDC 0568-73) protein is G/U mismatch-specific DNA glycosylase.